A 233-amino-acid chain; its full sequence is Phosphoribosylaminoimidazole-succinocarboxamide synthase (233 aa).

This sequence belongs to the SAICAR synthetase family.

It catalyses the reaction 5-amino-1-(5-phospho-D-ribosyl)imidazole-4-carboxylate + L-aspartate + ATP = (2S)-2-[5-amino-1-(5-phospho-beta-D-ribosyl)imidazole-4-carboxamido]succinate + ADP + phosphate + 2 H(+). Its pathway is purine metabolism; IMP biosynthesis via de novo pathway; 5-amino-1-(5-phospho-D-ribosyl)imidazole-4-carboxamide from 5-amino-1-(5-phospho-D-ribosyl)imidazole-4-carboxylate: step 1/2. In Thermococcus sibiricus (strain DSM 12597 / MM 739), this protein is Phosphoribosylaminoimidazole-succinocarboxamide synthase.